The sequence spans 61 residues: MVKNTDDVSVSTPAKEGIMQGNGAWCVVGFPPCKDNKCYCCIGGRTHARYSTMAECRHACF.

C38 and C60 are oxidised to a cystine.

Belongs to the MEG family. Ubiquitous.

The protein is Protein MATERNALLY EXPRESSED GENE 6 (MEG6) of Zea mays (Maize).